Here is a 190-residue protein sequence, read N- to C-terminus: MSIILGIDPGSRVTGYGVIRQTGRHLEYLGSGAIRTQVEDLPTRLKRIYAGVTEIITQFQPDMFAIEQVFMAKNADSALKLGQARGTAIVAAVNHDLPVFEYAARLVKQTVVGIGSADKVQVQEMVTRILKLSDKPQTDAADALAIAITHAHSIQHSLHIANSVKMTETQEKMTALLKTRYSRGRFRLKI.

Catalysis depends on residues D8, E67, and D139. Mg(2+) contacts are provided by D8, E67, and D139.

Belongs to the RuvC family. Homodimer which binds Holliday junction (HJ) DNA. The HJ becomes 2-fold symmetrical on binding to RuvC with unstacked arms; it has a different conformation from HJ DNA in complex with RuvA. In the full resolvosome a probable DNA-RuvA(4)-RuvB(12)-RuvC(2) complex forms which resolves the HJ. Requires Mg(2+) as cofactor.

It localises to the cytoplasm. The enzyme catalyses Endonucleolytic cleavage at a junction such as a reciprocal single-stranded crossover between two homologous DNA duplexes (Holliday junction).. The RuvA-RuvB-RuvC complex processes Holliday junction (HJ) DNA during genetic recombination and DNA repair. Endonuclease that resolves HJ intermediates. Cleaves cruciform DNA by making single-stranded nicks across the HJ at symmetrical positions within the homologous arms, yielding a 5'-phosphate and a 3'-hydroxyl group; requires a central core of homology in the junction. The consensus cleavage sequence is 5'-(A/T)TT(C/G)-3'. Cleavage occurs on the 3'-side of the TT dinucleotide at the point of strand exchange. HJ branch migration catalyzed by RuvA-RuvB allows RuvC to scan DNA until it finds its consensus sequence, where it cleaves and resolves the cruciform DNA. The chain is Crossover junction endodeoxyribonuclease RuvC from Haemophilus influenzae (strain PittEE).